Consider the following 273-residue polypeptide: uncharacterized protein (273 aa).

It localises to the virion. This is an uncharacterized protein from Acanthamoeba polyphaga (Amoeba).